The chain runs to 147 residues: MSNFTAEDKAAITSLWGKVNVEDAGGETLGRLLVVYPWTQRFFDSFGSLSSPSAIMGNPKVKAHGVKVLTSLGEAIKNLDDLKGTFDQLSELHCDKLHVDPENFRLLGNVLVTVLAILHGKEFTPEVQASRQKMVAGVASALGSRYH.

A Globin domain is found at 3–147; that stretch reads NFTAEDKAAI…VASALGSRYH (145 aa). T13 is modified (phosphothreonine). S45, S51, and S53 each carry phosphoserine. The residue at position 60 (K60) is an N6-acetyllysine. Position 64 (H64) interacts with heme b. Residue K83 is modified to N6-acetyllysine. H93 provides a ligand contact to heme b. C94 bears the S-nitrosocysteine mark. S140 carries the post-translational modification Phosphoserine.

Belongs to the globin family. Heterotetramer of two alpha chains and two gamma chains in fetal hemoglobin (Hb F). Red blood cells.

Its function is as follows. Gamma chains make up the fetal hemoglobin F, in combination with alpha chains. In Plecturocebus moloch (Dusky titi monkey), this protein is Hemoglobin subunit gamma-1 (HBG1).